The primary structure comprises 100 residues: uncharacterized protein (100 aa).

An Isoglutamyl lysine isopeptide (Lys-Gln) (interchain with Q-Cter in protein Pup) cross-link involves residue Lys98.

This is an uncharacterized protein from Mycobacterium tuberculosis (strain CDC 1551 / Oshkosh).